A 141-amino-acid polypeptide reads, in one-letter code: Alpha-lactalbumin (141 aa).

A signal peptide spans 1 to 19 (MMPLVPLLLVSIVFPGIQA). Residues 20–141 (TQLTRCELTE…ENLEQWVCKK (122 aa)) form the C-type lysozyme domain. 4 cysteine pairs are disulfide-bonded: Cys25-Cys139, Cys47-Cys130, Cys80-Cys96, and Cys92-Cys110. N-linked (GlcNAc...) asparagine glycosylation occurs at Asn64. 3 residues coordinate Ca(2+): Asp101, Asp106, and Asp107.

Belongs to the glycosyl hydrolase 22 family. In terms of assembly, lactose synthase (LS) is a heterodimer of a catalytic component, beta1,4-galactosyltransferase (beta4Gal-T1) and a regulatory component, alpha-lactalbumin (LA). As to expression, mammary gland specific. Secreted in milk.

The protein resides in the secreted. Its function is as follows. Regulatory subunit of lactose synthase, changes the substrate specificity of galactosyltransferase in the mammary gland making glucose a good acceptor substrate for this enzyme. This enables LS to synthesize lactose, the major carbohydrate component of milk. In other tissues, galactosyltransferase transfers galactose onto the N-acetylglucosamine of the oligosaccharide chains in glycoproteins. This Oryctolagus cuniculus (Rabbit) protein is Alpha-lactalbumin (LALBA).